Reading from the N-terminus, the 569-residue chain is Pyrophosphate--fructose 6-phosphate 1-phosphotransferase subunit beta (569 aa).

G107 provides a ligand contact to diphosphate. Mg(2+) is bound at residue D201. Substrate contacts are provided by residues 229–231, 268–269, 276–278, E337, and 442–445; these read TID, KY, MGR, and YEGR. The Proton acceptor role is filled by D231.

Belongs to the phosphofructokinase type A (PFKA) family. PPi-dependent PFK group II subfamily. Clade 'Long' sub-subfamily. As to quaternary structure, tetramer of two alpha (regulatory) and two beta (catalytic) chains. Mg(2+) is required as a cofactor.

The protein localises to the cytoplasm. It carries out the reaction beta-D-fructose 6-phosphate + diphosphate = beta-D-fructose 1,6-bisphosphate + phosphate + H(+). The protein operates within carbohydrate degradation; glycolysis; D-glyceraldehyde 3-phosphate and glycerone phosphate from D-glucose: step 3/4. Its activity is regulated as follows. Allosterically activated by fructose 2,6-bisphosphate. In terms of biological role, catalytic subunit of pyrophosphate--fructose 6-phosphate 1-phosphotransferase. Catalyzes the phosphorylation of D-fructose 6-phosphate, the first committing step of glycolysis. Uses inorganic phosphate (PPi) as phosphoryl donor instead of ATP like common ATP-dependent phosphofructokinases (ATP-PFKs), which renders the reaction reversible, and can thus function both in glycolysis and gluconeogenesis. This Solanum tuberosum (Potato) protein is Pyrophosphate--fructose 6-phosphate 1-phosphotransferase subunit beta.